A 511-amino-acid chain; its full sequence is Bifunctional purine biosynthesis protein PurH (511 aa).

In terms of domain architecture, MGS-like spans 1–147 (MIQIKRALIS…KNYKHTLVLT (147 aa)).

It belongs to the PurH family.

It catalyses the reaction (6R)-10-formyltetrahydrofolate + 5-amino-1-(5-phospho-beta-D-ribosyl)imidazole-4-carboxamide = 5-formamido-1-(5-phospho-D-ribosyl)imidazole-4-carboxamide + (6S)-5,6,7,8-tetrahydrofolate. The catalysed reaction is IMP + H2O = 5-formamido-1-(5-phospho-D-ribosyl)imidazole-4-carboxamide. The protein operates within purine metabolism; IMP biosynthesis via de novo pathway; 5-formamido-1-(5-phospho-D-ribosyl)imidazole-4-carboxamide from 5-amino-1-(5-phospho-D-ribosyl)imidazole-4-carboxamide (10-formyl THF route): step 1/1. It functions in the pathway purine metabolism; IMP biosynthesis via de novo pathway; IMP from 5-formamido-1-(5-phospho-D-ribosyl)imidazole-4-carboxamide: step 1/1. This Leptospira borgpetersenii serovar Hardjo-bovis (strain JB197) protein is Bifunctional purine biosynthesis protein PurH.